The following is a 238-amino-acid chain: Ribitol-5-phosphate cytidylyltransferase 2 (238 aa).

CTP is bound by residues 7–10 (LAGG) and 81–87 (GTDRNET).

This sequence belongs to the IspD/TarI cytidylyltransferase family. TarI subfamily.

It catalyses the reaction D-ribitol 5-phosphate + CTP + H(+) = CDP-L-ribitol + diphosphate. It functions in the pathway cell wall biogenesis; poly(ribitol phosphate) teichoic acid biosynthesis. Catalyzes the transfer of the cytidylyl group of CTP to D-ribitol 5-phosphate. This is Ribitol-5-phosphate cytidylyltransferase 2 from Staphylococcus aureus (strain MSSA476).